A 476-amino-acid polypeptide reads, in one-letter code: Beta-amyrin 28-monooxygenase (476 aa).

Residues 2–22 form a helical membrane-spanning segment; it reads ELLYVCLVCVFVFLVSLLLLY. C421 is a heme binding site.

The protein belongs to the cytochrome P450 family. The cofactor is heme. In terms of tissue distribution, specifically expressed in roots.

It is found in the membrane. The catalysed reaction is beta-amyrin + 3 reduced [NADPH--hemoprotein reductase] + 3 O2 = oleanolate + 3 oxidized [NADPH--hemoprotein reductase] + 4 H2O + 4 H(+). In terms of biological role, catalyzes the carboxylation of beta-amyrin at the C-28 position to form oleanolate. Catalyzes the carboxylation of alpha-amyrin at the C-28 position to form ursolate. The polypeptide is Beta-amyrin 28-monooxygenase (CYP716A44) (Solanum lycopersicum (Tomato)).